The following is a 1048-amino-acid chain: Platelet-derived growth factor receptor beta (1048 aa).

The first 30 residues, 1–30 (MLRASAMRAAVLHLTVALAALLSSCTTVSC), serve as a signal peptide directing secretion. Over 31-528 (LKIVPEEKQL…LVSSSLFSQV (498 aa)) the chain is Extracellular. The Ig-like C2-type 1 domain maps to 35-124 (PEEKQLILAE…EIKEVAVFVP (90 aa)). Disulfide bonds link C52/C108 and C153/C194. N87, N159, N224, and N239 each carry an N-linked (GlcNAc...) asparagine glycan. 2 Ig-like C2-type domains span residues 216–309 (PEDI…ASVN) and 319–406 (AVKS…KEVT). Cysteines 240 and 293 form a disulfide. N-linked (GlcNAc...) asparagine glycans are attached at residues N309, N327, and N457. A disulfide bridge links C434 with C503. The helical transmembrane segment at 529-549 (VLLAVVLTLVPIIIMSIIILI) threads the bilayer. The Cytoplasmic segment spans residues 550–1048 (AVWKKKPRYE…PIPDPKPEKS (499 aa)). A phosphotyrosine; by autocatalysis mark is found at Y558, Y575, and Y577. A Protein kinase domain is found at 596–957 (LVLGRTLGSG…FLVHCVGDML (362 aa)). ATP-binding positions include 602–610 (LGSGAFGRV) and K630. A phosphotyrosine; by autocatalysis mark is found at Y735, Y746, Y758, Y766, and Y770. The active-site Proton acceptor is the D821. A phosphotyrosine; by autocatalysis mark is found at Y852 and Y1036.

Belongs to the protein kinase superfamily. Tyr protein kinase family. CSF-1/PDGF receptor subfamily. Interacts with homodimeric PDGFB and PDGFD, and with heterodimers formed by PDGFA and PDGFB. Monomer in the absence of bound ligand. Interaction with homodimeric PDGFB, heterodimers formed by PDGFA and PDGFB or homodimeric PDGFD, leads to receptor dimerization, where both PDGFRA homodimers and heterodimers with PDGFRB are observed. Post-translationally, ubiquitinated. After autophosphorylation, the receptor is polyubiquitinated, leading to its degradation. In terms of processing, autophosphorylated on tyrosine residues upon ligand binding. Autophosphorylation occurs in trans, i.e. one subunit of the dimeric receptor phosphorylates tyrosine residues on the other subunit.

It is found in the cell membrane. It localises to the cytoplasmic vesicle. The protein localises to the lysosome lumen. The catalysed reaction is L-tyrosyl-[protein] + ATP = O-phospho-L-tyrosyl-[protein] + ADP + H(+). With respect to regulation, present in an inactive conformation in the absence of bound ligand. Binding of PDGFB and/or PDGFD leads to dimerization and activation by autophosphorylation on tyrosine residues. Tyrosine-protein kinase that acts as a cell-surface receptor for homodimeric PDGFB and PDGFD and for heterodimers formed by PDGFA and PDGFB, and plays an essential role in the regulation of embryonic development, cell proliferation, survival, differentiation, chemotaxis and migration. Plays an essential role in blood vessel development by promoting proliferation, migration and recruitment of pericytes and smooth muscle cells to endothelial cells. Required for normal development of the cardiovascular system. Required for normal recruitment of pericytes (mesangial cells) in the kidney glomerulus, and for normal formation of a branched network of capillaries in kidney glomeruli. Promotes rearrangement of the actin cytoskeleton and the formation of membrane ruffles. Binding of its cognate ligands - homodimeric PDGFB, heterodimers formed by PDGFA and PDGFB or homodimeric PDGFD -leads to the activation of several signaling cascades; the response depends on the nature of the bound ligand and is modulated by the formation of heterodimers between PDGFRA and PDGFRB. Receptor signaling is down-regulated by protein phosphatases that dephosphorylate the receptor and its down-stream effectors, and by rapid internalization of the activated receptor. The protein is Platelet-derived growth factor receptor beta (pdgfrb) of Takifugu rubripes (Japanese pufferfish).